A 753-amino-acid polypeptide reads, in one-letter code: Enhancer of polycomb-like protein 1 (753 aa).

Disordered stretches follow at residues 1–75 (MAAA…RDLH) and 429–490 (VRTE…LPPA). Residues 46-71 (LDSNELEPSQVHHLNSNASSSSTQQP) are compositionally biased toward polar residues. Positions 429-449 (VRTEDEEREKKREKKKQDQEL) are enriched in basic and acidic residues. Over residues 450 to 463 (ALKQQQALQQQQQQ) the composition is skewed to low complexity.

This sequence belongs to the enhancer of polycomb family. In terms of assembly, component of the NuA4 histone acetyltransferase complex.

The protein localises to the nucleus. In terms of biological role, component of the NuA4 histone acetyltransferase complex which is involved in transcriptional activation of selected genes principally by acetylation of nucleosomal histone H4 and H2A. The NuA4 complex is also involved in DNA repair. Involved in gene silencing by neighboring heterochromatin, blockage of the silencing spreading along the chromosome, and required for cell cycle progression through G2/M. This Candida albicans (strain SC5314 / ATCC MYA-2876) (Yeast) protein is Enhancer of polycomb-like protein 1 (EPL1).